The primary structure comprises 511 residues: uncharacterized protein (511 aa).

The LisH domain maps to 13 to 45 (IYDALNMLVYDYLLKMKYEGSAKIFFNEAGLEN). The segment at 172-212 (PRFEEQGVPPAKMAPKQFRDEGRSGNVESPSIATNQEGSSP) is disordered. The segment covering 197–210 (NVESPSIATNQEGS) has biased composition (polar residues).

This is an uncharacterized protein from Encephalitozoon cuniculi (strain GB-M1) (Microsporidian parasite).